The sequence spans 379 residues: Glucose-1-phosphate adenylyltransferase (379 aa).

Residues tyrosine 99, glycine 164, 179–180 (EK), and serine 190 contribute to the alpha-D-glucose 1-phosphate site.

The protein belongs to the bacterial/plant glucose-1-phosphate adenylyltransferase family. As to quaternary structure, homotetramer.

The enzyme catalyses alpha-D-glucose 1-phosphate + ATP + H(+) = ADP-alpha-D-glucose + diphosphate. The protein operates within glycan biosynthesis; glycogen biosynthesis. Its function is as follows. Involved in the biosynthesis of ADP-glucose, a building block required for the elongation reactions to produce glycogen. Catalyzes the reaction between ATP and alpha-D-glucose 1-phosphate (G1P) to produce pyrophosphate and ADP-Glc. This chain is Glucose-1-phosphate adenylyltransferase, found in Bacillus licheniformis (strain ATCC 14580 / DSM 13 / JCM 2505 / CCUG 7422 / NBRC 12200 / NCIMB 9375 / NCTC 10341 / NRRL NRS-1264 / Gibson 46).